The following is a 126-amino-acid chain: Basic phospholipase A2 1 (126 aa).

The propeptide occupies 1–7 (SNRPMPL). Cystine bridges form between C18/C78, C33/C125, C35/C51, C50/C106, C57/C99, C67/C92, and C85/C97. Residues Y34, G36, and G38 each contribute to the Ca(2+) site. Residue H54 is part of the active site. D55 serves as a coordination point for Ca(2+). The active site involves D100.

It belongs to the phospholipase A2 family. Group I subfamily. D49 sub-subfamily. Heterodimer formed between two homologous isoforms: isoform 1 and isoform 2. Requires Ca(2+) as cofactor. In terms of tissue distribution, expressed by the venom gland.

It is found in the secreted. It catalyses the reaction a 1,2-diacyl-sn-glycero-3-phosphocholine + H2O = a 1-acyl-sn-glycero-3-phosphocholine + a fatty acid + H(+). Its function is as follows. PLA2 catalyzes the calcium-dependent hydrolysis of the 2-acyl groups in 3-sn-phosphoglycerides. The polypeptide is Basic phospholipase A2 1 (Naja sagittifera (Andaman cobra)).